Here is a 151-residue protein sequence, read N- to C-terminus: UPF0208 membrane protein YfbV (151 aa).

2 helical membrane passes run 46–65 (FGIR…QIAL) and 69–91 (LGPA…WWLG).

The protein belongs to the UPF0208 family.

It is found in the cell inner membrane. This Photorhabdus temperata protein is UPF0208 membrane protein YfbV (yfbV).